The chain runs to 873 residues: Protein SEY1 (873 aa).

The segment at 1 to 21 (MVANGHFAGSADGQDSSSYEH) is disordered. Residues 1 to 749 (MVANGHFAGS…KRSAIGGITQ (749 aa)) lie on the Cytoplasmic side of the membrane. In terms of domain architecture, GB1/RHD3-type G spans 49 to 307 (GFNYHLISVF…IPADGFAVYA (259 aa)). A GTP-binding site is contributed by 59–66 (GSQSTGKS). A coiled-coil region spans residues 482-506 (SNYQQELSLYQKDLERTSGQLRRDE). Residues 676–703 (LDKWIGHTPSSATPADEEDLTPIGGVDD) form a disordered region. Over residues 690–703 (ADEEDLTPIGGVDD) the composition is skewed to acidic residues. The chain crosses the membrane as a helical span at residues 750–770 (VPLYFYGLLFALGWNEILAVL). Over 771–773 (RNP) the chain is Lumenal. A helical transmembrane segment spans residues 774–794 (VYFLLLFVCAIGAYITYQLNL). The Cytoplasmic segment spans residues 795–873 (WGPIIKMTEA…EDVDDDDDDF (79 aa)). Residues 828–873 (RQAMAMSGARNATEEHEMSRLSRKPAERGGRKNRADEDVDDDDDDF) are disordered. Residues 839-863 (ATEEHEMSRLSRKPAERGGRKNRAD) show a composition bias toward basic and acidic residues. Acidic residues predominate over residues 864 to 873 (EDVDDDDDDF).

This sequence belongs to the TRAFAC class dynamin-like GTPase superfamily. GB1/RHD3 GTPase family. RHD3 subfamily.

The protein resides in the endoplasmic reticulum membrane. In terms of biological role, cooperates with the reticulon proteins and tubule-shaping DP1 family proteins to generate and maintain the structure of the tubular endoplasmic reticulum network. Has GTPase activity, which is required for its function in ER organization. The polypeptide is Protein SEY1 (Ajellomyces capsulatus (strain G186AR / H82 / ATCC MYA-2454 / RMSCC 2432) (Darling's disease fungus)).